Reading from the N-terminus, the 541-residue chain is uncharacterized protein (541 aa).

The segment at residues 1–55 (MTKTVTRAGGASGPQQFQSGGETMKYEITRRRFLAASSAVLAAPAIVTMVRPARA) is a signal peptide (tat-type signal). The interval 339 to 362 (RRSPSGISSPRSNRQPKAEALSAR) is disordered. Over residues 341 to 351 (SPSGISSPRSN) the composition is skewed to low complexity. 4 consecutive transmembrane segments (helical) span residues 379-399 (AIVW…MVFM), 420-440 (LPVL…AHSG), 466-486 (LVSA…GEIA), and 500-520 (VGYF…LAVA).

Belongs to the bacterial solute-binding protein 7 family. Post-translationally, predicted to be exported by the Tat system. The position of the signal peptide cleavage has not been experimentally proven.

It localises to the cell membrane. This is an uncharacterized protein from Sinorhizobium fredii (strain NBRC 101917 / NGR234).